Reading from the N-terminus, the 146-residue chain is Large ribosomal subunit protein uL15 (146 aa).

The span at 1 to 18 (MKLHELKPSEGSRKERNR) shows a compositional bias: basic and acidic residues. The segment at 1–50 (MKLHELKPSEGSRKERNRVGRGTGSGNGKTSGRGHKGQKARSGGGVRLGF) is disordered. The segment covering 21 to 31 (RGTGSGNGKTS) has biased composition (gly residues).

Belongs to the universal ribosomal protein uL15 family. In terms of assembly, part of the 50S ribosomal subunit.

Its function is as follows. Binds to the 23S rRNA. This Listeria innocua serovar 6a (strain ATCC BAA-680 / CLIP 11262) protein is Large ribosomal subunit protein uL15.